The primary structure comprises 232 residues: MSDPAVEVTPAVPVASPAKAKKEKKPKSDKPKKPKAPRTHLPVSDMVVNAVKTLKERGGSSVQAIKKFLVAQYKVDVDKLSPFIKKYLKSAVEKGQLLQTKGKGASGSFKLPAAAKKEKVVKKPKKVAEKKPKKAAAPKPKKAGEKKVKKTIAKKPKAATATKIKKPVAKTTKKPAAAKPAAKKAAPKPKAAPKPKAAKKETKPKKAAAPKAKKPAVEKKPKAAKKPAAKKA.

Over residues 1 to 18 (MSDPAVEVTPAVPVASPA) the composition is skewed to low complexity. 2 disordered regions span residues 1 to 42 (MSDP…THLP) and 98 to 232 (LQTK…AKKA). The H15 domain maps to 39 to 113 (THLPVSDMVV…GASGSFKLPA (75 aa)). 4 stretches are compositionally biased toward basic residues: residues 131-141 (KPKKAAAPKPK), 147-173 (KVKKTIAKKPKAATATKIKKPVAKTTK), 181-214 (AAKKAAPKPKAAPKPKAAKKETKPKKAAAPKAKK), and 222-232 (KAAKKPAAKKA).

This sequence belongs to the histone H1/H5 family.

It is found in the nucleus. Its subcellular location is the chromosome. Functionally, histones H1 are necessary for the condensation of nucleosome chains into higher-order structures. This is Histone H1A from Chironomus tentans (Midge).